Consider the following 123-residue polypeptide: Maintenance of telomere capping protein 3, mitochondrial (123 aa).

A mitochondrion-targeting transit peptide spans 1–37 (MMGRNGIRLALKRSFSTYQPPVVEITNITKLWPTLRP).

Its subcellular location is the mitochondrion. In terms of biological role, may be involved in telomere capping. The protein is Maintenance of telomere capping protein 3, mitochondrial (MTC3) of Saccharomyces cerevisiae (strain ATCC 204508 / S288c) (Baker's yeast).